Here is a 953-residue protein sequence, read N- to C-terminus: Valine--tRNA ligase (953 aa).

The 'HIGH' region signature appears at 42-52 (PNVTGSLHMGH). Positions 554–558 (KMSKS) match the 'KMSKS' region motif. Lys557 serves as a coordination point for ATP. The stretch at 884-952 (LIDKDAELDR…LEQQKATIAA (69 aa)) forms a coiled coil.

The protein belongs to the class-I aminoacyl-tRNA synthetase family. ValS type 1 subfamily. In terms of assembly, monomer.

The protein localises to the cytoplasm. It carries out the reaction tRNA(Val) + L-valine + ATP = L-valyl-tRNA(Val) + AMP + diphosphate. Catalyzes the attachment of valine to tRNA(Val). As ValRS can inadvertently accommodate and process structurally similar amino acids such as threonine, to avoid such errors, it has a 'posttransfer' editing activity that hydrolyzes mischarged Thr-tRNA(Val) in a tRNA-dependent manner. In Vibrio cholerae serotype O1 (strain ATCC 39315 / El Tor Inaba N16961), this protein is Valine--tRNA ligase.